Reading from the N-terminus, the 116-residue chain is Large ribosomal subunit protein bL17 (116 aa).

It belongs to the bacterial ribosomal protein bL17 family. As to quaternary structure, part of the 50S ribosomal subunit. Contacts proteins L3 and L32.

In terms of biological role, binds to the 23S rRNA. In Deinococcus radiodurans (strain ATCC 13939 / DSM 20539 / JCM 16871 / CCUG 27074 / LMG 4051 / NBRC 15346 / NCIMB 9279 / VKM B-1422 / R1), this protein is Large ribosomal subunit protein bL17.